The sequence spans 441 residues: Serine carboxypeptidase-like 3 (441 aa).

Positions 1-30 are cleaved as a signal peptide; the sequence is MASNYVFSVLRSLLLLIHTVFLGQHHVSSA. 3 disulfides stabilise this stretch: Cys88–Cys331, Cys252–Cys266, and Cys290–Cys297. Asn109 carries an N-linked (GlcNAc...) asparagine glycan. Ser184 is a catalytic residue. Asn350 carries N-linked (GlcNAc...) asparagine glycosylation. Asp366 is an active-site residue. Asn382 carries an N-linked (GlcNAc...) asparagine glycan. His419 is a catalytic residue.

This sequence belongs to the peptidase S10 family. Expressed in roots.

It is found in the secreted. In terms of biological role, probable carboxypeptidase. This chain is Serine carboxypeptidase-like 3 (SCPL3), found in Arabidopsis thaliana (Mouse-ear cress).